The following is a 344-amino-acid chain: MEPIDDRIMVTGGAGYIGSHTVIELIEAGYTPVIVDNLSNSSLEAIKRVESITGKEIEFHHVDIMNEKALDEIFETGNIRSVIHFAGLKAVGESNKLPLKYYNNNIAGTLTLLNLMDKHRVKKLVFSSSATVYGDPHTVPITEDFPLSATNPYGRTKLYVEGILQDLCASDPEWNCIMLRYFNPVGAHPSGLIGEDPKDIPNNLMPYVTQTAIGKRPILSIFGNDYNTPDGTGVRDFIHVVDLAKGHISALSSLHSKKQGCVAYNLGTGRGYSVLEMVGALKQASHKEIPYQIVSRRKGDVASSFADPSKALKELGWKATHNQDDMCRDAWKWQSLNPNGYSDS.

NAD(+)-binding positions include 15–17 (GYI), 36–40 (DNLSN), 63–64 (DI), Phe-85, and Lys-89. Position 129–131 (129–131 (SAT)) interacts with substrate. Tyr-153 serves as the catalytic Proton acceptor. Residues Lys-157 and Tyr-181 each coordinate NAD(+). Residues 181–183 (YFN), 202–204 (NNL), 220–222 (SIF), Arg-235, and 297–300 (RKGD) contribute to the substrate site.

The protein belongs to the NAD(P)-dependent epimerase/dehydratase family. Homodimer. NAD(+) is required as a cofactor.

It carries out the reaction UDP-alpha-D-glucose = UDP-alpha-D-galactose. The catalysed reaction is UDP-N-acetyl-alpha-D-glucosamine = UDP-N-acetyl-alpha-D-galactosamine. Its pathway is carbohydrate metabolism; galactose metabolism. In terms of biological role, catalyzes two distinct but analogous reactions: the reversible epimerization of UDP-glucose to UDP-galactose and the reversible epimerization of UDP-N-acetylglucosamine to UDP-N-acetylgalactosamine. The reaction with UDP-Gal plays a critical role in the Leloir pathway of galactose catabolism in which galactose is converted to the glycolytic intermediate glucose 6-phosphate. It contributes to the catabolism of dietary galactose and enables the endogenous biosynthesis of both UDP-Gal and UDP-GalNAc when exogenous sources are limited. Both UDP-sugar interconversions are important in the synthesis of glycoproteins and glycolipids. The sequence is that of UDP-glucose 4-epimerase (galE) from Dictyostelium discoideum (Social amoeba).